Here is a 175-residue protein sequence, read N- to C-terminus: Probable RNA-binding protein EIF1AD (175 aa).

Positions 5 to 89 constitute an S1-like domain; sequence TKKRYITNKV…VKGEIEYILD (85 aa). A compositionally biased stretch (basic and acidic residues) spans 116–128; the sequence is EAKRGQTSDKMID. Residues 116–175 form a disordered region; sequence EAKRGQTSDKMIDDDMLPPSESEEEDESEGEETYDEDDVDDEEEEEFDTYNPNRMQAPSK. The segment covering 129–163 has biased composition (acidic residues); it reads DDMLPPSESEEEDESEGEETYDEDDVDDEEEEEFD. Positions 165–175 are enriched in polar residues; it reads YNPNRMQAPSK.

The protein belongs to the EIF1AD family.

The sequence is that of Probable RNA-binding protein EIF1AD from Caenorhabditis elegans.